Here is a 1248-residue protein sequence, read N- to C-terminus: MAEKAKKKKNGGGGNQRIAFYKLFTFADRYDIVLMVIGTLSAMANGLTQPFMSILMGQLINVFGFSDHDHVFKEVSKVAVKFLYLAAYAGVVSFLQVSCWMVTGERQSTRIRRLYLKTILRQDIGFFDTETNTGEVIGRMSGDTILIQDSMGEKVGKFTQLVSSFVGGFTVAFIVGMKLTLALLPCVPLIVGTGGAMTYIMSKKAQRVQLAYTEAGNVVQQAVGSIRTVVAFTGEKQSMGKYEKKLEIAYKSMVKQGLYSGLGIGIMMVVVYCTYGFAIWYGARQIIEKGYTGGQVMNVITSILTGGMALGQTLPSLNSFAAGTAAAYKMFETIKRKPKIDAYDMSGEVLEEIKGDIELRDVYFRYPARPDVQIFVGFSLTVPNGMTVALVGQSGSGKSTVISLIERFYDPESGEVLIDGIDLKKFQVKWIRSKIGLVSQEPILFATTIRENIVYGKKDASDQEIRTALKLANASNFIDKLPQGLETMVGEHGTQLSGGQKQRIAIARAILKNPKILLLDEATSALDAESERIVQDALVKLMLSRTTVVVAHRLTTIRTADMIAVVQQGKVIEKGTHDEMIKDPEGTYSQLVRLQEGSKKEEAIDKEPEKCEMSLEIESSDSQNGIHSGTLTSPSGLPGVISLDQTEEFHENISSTKTQTVKKGKEVSLRRLAHLNKPEISVLLLGSLAAVIHGIVFPVQGLLLSRTIRIFFEPSNKLKNDSLFWALIFVALGLTDLIVIPLQNYLFAIAGAKLIKRIRSLSFDRVLHQDISWFDDTKNSSGVIGARLSTDASTVKSIVGDVLGLIMQNMATIIGAFIIAFTANWLLALMALLVAPVMFFQGYYQIKFITGFGAKARGKYEEASQVASDAVSSIRTVASFCAEDKVMDLYQEKCDEPKQQGFKLGLVSGLCYGGSYLALYVIESVCFLGGSWLIQNRRATFGEFFQVFFALTLTAVGVTQTSTMAPDINKAKDSAASIFDILDSKPKIDSSSEKGTILPIVHGDIELQHVSFRYPMRPDIQIFSDLCLTISSGQTVALVGESGSGKSTVISLLERFYDPDSGKILLDQVEIQSLKLSWLREQMGLVSQEPVLFNETIGSNIAYGKIGGATEEEIITAAKAANVHNFISSLPQGYETSVGERGVQLSGGQKQRIAIARAILKDPKILLLDEATSALDAESERVVQDALDQVMVNRTTVVVAHLLTTIKDADMIAVVKNGVIAESGRHETLMEISGGAYASLVAFNMSAN.

Transmembrane regions (helical) follow at residues 32-52, 82-102, 158-175, 179-201, 261-281, and 299-321; these read IVLM…QPFM, FLYL…CWMV, FTQL…AFIV, LTLA…TYIM, GLGI…AIWY, and VITS…NSFA. Residues 35 to 322 form the ABC transmembrane type-1 1 domain; it reads MVIGTLSAMA…TLPSLNSFAA (288 aa). Residues 357–593 enclose the ABC transporter 1 domain; that stretch reads IELRDVYFRY…PEGTYSQLVR (237 aa). 392–399 lines the ATP pocket; it reads GQSGSGKS. Residues Asn-473 and Asn-652 are each glycosylated (N-linked (GlcNAc...) asparagine). The chain crosses the membrane as a helical span at residues 682–702; sequence VLLLGSLAAVIHGIVFPVQGL. In terms of domain architecture, ABC transmembrane type-1 2 spans 683 to 970; the sequence is LLLGSLAAVI…TSTMAPDINK (288 aa). The N-linked (GlcNAc...) asparagine glycan is linked to Asn-720. Residues 722-742 traverse the membrane as a helical segment; the sequence is SLFWALIFVALGLTDLIVIPL. An N-linked (GlcNAc...) asparagine glycan is attached at Asn-779. Transmembrane regions (helical) follow at residues 813 to 833, 834 to 854, 914 to 934, and 939 to 959; these read IIGA…MALL, VAPV…GFGA, GSYL…SWLI, and ATFG…VGVT. The 238-residue stretch at 1005-1242 folds into the ABC transporter 2 domain; that stretch reads IELQHVSFRY…SGGAYASLVA (238 aa). Residue 1040–1047 coordinates ATP; it reads GESGSGKS. 3 N-linked (GlcNAc...) asparagine glycosylation sites follow: Asn-1094, Asn-1193, and Asn-1244.

The protein belongs to the ABC transporter superfamily. ABCB family. Multidrug resistance exporter (TC 3.A.1.201) subfamily.

The protein localises to the membrane. This is ABC transporter B family member 7 (ABCB7) from Arabidopsis thaliana (Mouse-ear cress).